Here is a 510-residue protein sequence, read N- to C-terminus: 2,3-bisphosphoglycerate-independent phosphoglycerate mutase (510 aa).

2 residues coordinate Mn(2+): aspartate 14 and serine 64. Serine 64 serves as the catalytic Phosphoserine intermediate. Substrate contacts are provided by residues histidine 125, 155–156 (RD), arginine 187, arginine 193, 259–262 (RADR), and lysine 332. 5 residues coordinate Mn(2+): aspartate 399, histidine 403, aspartate 440, histidine 441, and histidine 459.

It belongs to the BPG-independent phosphoglycerate mutase family. As to quaternary structure, monomer. It depends on Mn(2+) as a cofactor.

The catalysed reaction is (2R)-2-phosphoglycerate = (2R)-3-phosphoglycerate. It functions in the pathway carbohydrate degradation; glycolysis; pyruvate from D-glyceraldehyde 3-phosphate: step 3/5. In terms of biological role, catalyzes the interconversion of 2-phosphoglycerate and 3-phosphoglycerate. The polypeptide is 2,3-bisphosphoglycerate-independent phosphoglycerate mutase (Pseudomonas syringae pv. syringae (strain B728a)).